The chain runs to 375 residues: tRNA-specific 2-thiouridylase MnmA (375 aa).

Residues 12 to 19 and M38 contribute to the ATP site; that span reads GMSGGVDS. The interval 98 to 100 is interaction with target base in tRNA; the sequence is NPD. C103 (nucleophile) is an active-site residue. A disulfide bond links C103 and C200. G127 provides a ligand contact to ATP. The tract at residues 150–152 is interaction with tRNA; the sequence is KDQ. The active-site Cysteine persulfide intermediate is the C200. The interval 312-313 is interaction with tRNA; it reads RY.

This sequence belongs to the MnmA/TRMU family.

It is found in the cytoplasm. It catalyses the reaction S-sulfanyl-L-cysteinyl-[protein] + uridine(34) in tRNA + AH2 + ATP = 2-thiouridine(34) in tRNA + L-cysteinyl-[protein] + A + AMP + diphosphate + H(+). Functionally, catalyzes the 2-thiolation of uridine at the wobble position (U34) of tRNA, leading to the formation of s(2)U34. The chain is tRNA-specific 2-thiouridylase MnmA from Ligilactobacillus salivarius (strain UCC118) (Lactobacillus salivarius).